The primary structure comprises 239 residues: Ribosomal RNA small subunit methyltransferase G (239 aa).

S-adenosyl-L-methionine-binding positions include Gly105, Leu110, 156–157, and Arg169; that span reads VE.

Belongs to the methyltransferase superfamily. RNA methyltransferase RsmG family.

The protein resides in the cytoplasm. The catalysed reaction is guanosine(527) in 16S rRNA + S-adenosyl-L-methionine = N(7)-methylguanosine(527) in 16S rRNA + S-adenosyl-L-homocysteine. Specifically methylates the N7 position of guanine in position 527 of 16S rRNA. This chain is Ribosomal RNA small subunit methyltransferase G, found in Verminephrobacter eiseniae (strain EF01-2).